A 303-amino-acid chain; its full sequence is uncharacterized protein (303 aa).

NADP(+) contacts are provided by residues 7 to 12 and Asn-101; that span reads GAGGVG. Lys-184 (proton donor) is an active-site residue. NADP(+) is bound at residue Glu-267.

The protein belongs to the ketopantoate reductase family.

This is an uncharacterized protein from Bacillus subtilis (strain 168).